A 156-amino-acid polypeptide reads, in one-letter code: Small ribosomal subunit protein uS7 (156 aa).

The protein belongs to the universal ribosomal protein uS7 family. Part of the 30S ribosomal subunit. Contacts proteins S9 and S11.

Functionally, one of the primary rRNA binding proteins, it binds directly to 16S rRNA where it nucleates assembly of the head domain of the 30S subunit. Is located at the subunit interface close to the decoding center, probably blocks exit of the E-site tRNA. In Hamiltonella defensa subsp. Acyrthosiphon pisum (strain 5AT), this protein is Small ribosomal subunit protein uS7.